The chain runs to 306 residues: Ornithine carbamoyltransferase (306 aa).

Residues 50 to 53, Gln77, Arg101, and 128 to 131 contribute to the carbamoyl phosphate site; these read STRT and HPCQ. L-ornithine-binding positions include Asn160, Asp224, and 228–229; that span reads SM. Residues 261 to 262 and Arg289 each bind carbamoyl phosphate; that span reads CL.

Belongs to the aspartate/ornithine carbamoyltransferase superfamily. OTCase family.

The protein localises to the cytoplasm. The catalysed reaction is carbamoyl phosphate + L-ornithine = L-citrulline + phosphate + H(+). The protein operates within amino-acid biosynthesis; L-arginine biosynthesis; L-arginine from L-ornithine and carbamoyl phosphate: step 1/3. Its function is as follows. Reversibly catalyzes the transfer of the carbamoyl group from carbamoyl phosphate (CP) to the N(epsilon) atom of ornithine (ORN) to produce L-citrulline. The chain is Ornithine carbamoyltransferase from Aquifex aeolicus (strain VF5).